Consider the following 187-residue polypeptide: Elongation factor P (187 aa).

This sequence belongs to the elongation factor P family.

Its subcellular location is the cytoplasm. It functions in the pathway protein biosynthesis; polypeptide chain elongation. Its function is as follows. Involved in peptide bond synthesis. Stimulates efficient translation and peptide-bond synthesis on native or reconstituted 70S ribosomes in vitro. Probably functions indirectly by altering the affinity of the ribosome for aminoacyl-tRNA, thus increasing their reactivity as acceptors for peptidyl transferase. The polypeptide is Elongation factor P (Mycolicibacterium smegmatis (strain ATCC 700084 / mc(2)155) (Mycobacterium smegmatis)).